The following is a 390-amino-acid chain: Digeranylgeranylglycerophospholipid reductase (390 aa).

10 residues coordinate FAD: alanine 18, glutamate 37, cysteine 48, alanine 49, alanine 51, arginine 98, valine 122, aspartate 278, glycine 290, and isoleucine 291. Valine 368 lines the a 2,3-bis-O-(geranylgeranyl)-sn-glycerol 1-phospholipid pocket.

This sequence belongs to the geranylgeranyl reductase family. DGGGPL reductase subfamily. FAD serves as cofactor.

The catalysed reaction is a 2,3-bis-O-phytanyl-sn-glycerol 1-phospholipid + 8 A = a 2,3-bis-O-(geranylgeranyl)-sn-glycerol 1-phospholipid + 8 AH2. The enzyme catalyses 2,3-bis-O-(phytanyl)-sn-glycerol 1-phosphate + 8 A = 2,3-bis-O-(geranylgeranyl)-sn-glycerol 1-phosphate + 8 AH2. It carries out the reaction CDP-2,3-bis-O-(geranylgeranyl)-sn-glycerol + 8 AH2 = CDP-2,3-bis-O-(phytanyl)-sn-glycerol + 8 A. It catalyses the reaction archaetidylserine + 8 AH2 = 2,3-bis-O-phytanyl-sn-glycero-3-phospho-L-serine + 8 A. It participates in membrane lipid metabolism; glycerophospholipid metabolism. Is involved in the reduction of 2,3-digeranylgeranylglycerophospholipids (unsaturated archaeols) into 2,3-diphytanylglycerophospholipids (saturated archaeols) in the biosynthesis of archaeal membrane lipids. Catalyzes the formation of archaetidic acid (2,3-di-O-phytanyl-sn-glyceryl phosphate) from 2,3-di-O-geranylgeranylglyceryl phosphate (DGGGP) via the hydrogenation of each double bond of the isoprenoid chains. Is also probably able to reduce double bonds of geranyl groups in CDP-2,3-bis-O-(geranylgeranyl)-sn-glycerol and archaetidylserine, thus acting at various stages in the biosynthesis of archaeal membrane lipids. The sequence is that of Digeranylgeranylglycerophospholipid reductase from Methanococcus maripaludis (strain C7 / ATCC BAA-1331).